Reading from the N-terminus, the 314-residue chain is Mitochondrial MRF1 N(5)-glutamine methyltransferase MTQ1 (314 aa).

S-adenosyl-L-methionine is bound by residues 118-122, aspartate 141, and asparagine 188; that span reads FTGTG. 188 to 191 lines the substrate pocket; it reads NPPY.

This sequence belongs to the protein N5-glutamine methyltransferase family.

The protein localises to the mitochondrion. It catalyses the reaction L-glutaminyl-[peptide chain release factor] + S-adenosyl-L-methionine = N(5)-methyl-L-glutaminyl-[peptide chain release factor] + S-adenosyl-L-homocysteine + H(+). Methylates MRF1 on 'Gln-287' using S-adenosyl L-methionine as methyl donor. The chain is Mitochondrial MRF1 N(5)-glutamine methyltransferase MTQ1 (MTQ1) from Saccharomyces cerevisiae (strain ATCC 204508 / S288c) (Baker's yeast).